A 1007-amino-acid chain; its full sequence is A disintegrin and metalloproteinase with thrombospondin motifs 1 (1007 aa).

Residues 1 to 20 (MPCCLWAALSLLLAVVGAGA) form the signal peptide. 2 N-linked (GlcNAc...) asparagine glycosylation sites follow: Asn130 and Asn228. One can recognise a Peptidase M12B domain in the interval 184–370 (LWLELAIVAD…WSSCSKEQFH (187 aa)). Zn(2+) is bound at residue His322. Residues 322–333 (HELAHLLGLTHD) carry the Metal-binding motif. Residue Glu323 is part of the active site. Zn(2+) contacts are provided by His326 and His332. 4 cysteine pairs are disulfide-bonded: Cys338–Cys364, Cys494–Cys530, Cys498–Cys536, and Cys509–Cys520. Residues 482–537 (TPEWGDWEEWSACNADCGYGLRTRTRKCKYRGFVSESACEGAGSQVATCWAGSSCA) form the TSP type-1 1 domain. N-linked (GlcNAc...) asparagine glycans are attached at residues Asn561, Asn610, Asn626, Asn737, Asn777, and Asn865. TSP type-1 domains lie at 833–899 (CEFV…NRIP) and 900–952 (CPVY…RRCP). Disulfide bonds link Cys912–Cys946, Cys916–Cys951, and Cys927–Cys935.

Zn(2+) serves as cofactor.

The protein resides in the secreted. The protein localises to the extracellular space. It localises to the extracellular matrix. Functionally, involved in larval molting and metamorphosis. May degrade extracellular matrix (ECM) and basement membrane (BM) during the development of organs to allow degeneration and remodeling of tissues. The polypeptide is A disintegrin and metalloproteinase with thrombospondin motifs 1 (Bombyx mori (Silk moth)).